The sequence spans 433 residues: Trigger factor (433 aa).

One can recognise a PPIase FKBP-type domain in the interval 161–246 (EDRATIDFTG…LKKVEERELP (86 aa)).

Belongs to the FKBP-type PPIase family. Tig subfamily.

The protein localises to the cytoplasm. It carries out the reaction [protein]-peptidylproline (omega=180) = [protein]-peptidylproline (omega=0). Its function is as follows. Involved in protein export. Acts as a chaperone by maintaining the newly synthesized protein in an open conformation. Functions as a peptidyl-prolyl cis-trans isomerase. This chain is Trigger factor, found in Edwardsiella ictaluri (strain 93-146).